The chain runs to 177 residues: Large ribosomal subunit protein uL5 (177 aa).

The protein belongs to the universal ribosomal protein uL5 family. In terms of assembly, part of the 50S ribosomal subunit; part of the 5S rRNA/L5/L18/L25 subcomplex. Contacts the 5S rRNA and the P site tRNA. Forms a bridge to the 30S subunit in the 70S ribosome.

Functionally, this is one of the proteins that bind and probably mediate the attachment of the 5S RNA into the large ribosomal subunit, where it forms part of the central protuberance. In the 70S ribosome it contacts protein S13 of the 30S subunit (bridge B1b), connecting the 2 subunits; this bridge is implicated in subunit movement. Contacts the P site tRNA; the 5S rRNA and some of its associated proteins might help stabilize positioning of ribosome-bound tRNAs. This chain is Large ribosomal subunit protein uL5, found in Neorickettsia sennetsu (strain ATCC VR-367 / Miyayama) (Ehrlichia sennetsu).